The sequence spans 296 residues: ADP-forming sulfoacetate-CoA ligase subunit SqwL (296 aa).

CoA is bound by residues 17–20 (TGSE), Lys-43, and 96–98 (IAD). His-251 serves as the catalytic Tele-phosphohistidine intermediate.

This sequence belongs to the succinate/malate CoA ligase alpha subunit family. In terms of assembly, forms a complex with SqwK.

It catalyses the reaction sulfoacetate + ATP + CoA = sulfoacetyl-CoA + ADP + phosphate. Part of a variant of the sulfo-TK pathway, a D-sulfoquinovose degradation pathway that produces sulfoacetate. Hydrolyzes sulfoacetyl-coenzyme A (sulfoacetyl-CoA) to produce sulfoacetate and CoA coupled with the phosphorylation of ADP to generate ATP. Cannot use succinate, acetate or 3-hydroxypropionate, and shows only residual activities with malonate and 3-sulfopropanoate. The sequence is that of ADP-forming sulfoacetate-CoA ligase subunit SqwL from Acholeplasma sp.